Consider the following 408-residue polypeptide: Protein ZNF365 (408 aa).

A Phosphoserine modification is found at Ser-16. The C2H2-type; degenerate zinc-finger motif lies at 26-51 (FRCPRCGDHTRFRSLSSLRAHLEFSH). 2 positions are modified to phosphoserine: Ser-139 and Ser-146. Residues 170–298 (VEAVDRTIEK…QLEYYQSQQA (129 aa)) adopt a coiled-coil conformation. Residue Thr-176 is modified to Phosphothreonine. Ser-370 is subject to Phosphoserine.

Homodimer. Interacts with NDE1 and NDEL1. Interacts with DISC1. Interacts with PARP1. Interacts with MCRS1. In terms of tissue distribution, detected in several tissues, with highest levels in brain. Also expressed during embryonic development. Expressed in cerebral cortex, hippocampus, striatum, inferior colliculus and thalamus.

It is found in the cytoplasm. It localises to the cytoskeleton. Its subcellular location is the microtubule organizing center. The protein localises to the centrosome. Functionally, contributes to genomic stability by preventing telomere dysfunction. Involved in the morphogenesis of basket cells in the somatosensory cortex during embryogenesis. Involved in the positive regulation of oligodendrocyte differentiation during postnatal growth. Involved in dendritic arborization, morphogenesis of spine density dendrite, and establishment of postsynaptic dendrite density in cortical pyramidal neurons. Involved in the regulation of neurogenesis. Negatively regulates neurite outgrowth. Involved in homologous recombination (HR) repair pathway. Required for proper resolution of DNA double-strand breaks (DSBs) by HR. Is required for recovery of stalled replication forks, and directly contributes to genomic stability. Interacts with PARP1 and mediates MRE11-dependent DNA end resection during replication fork recovery. This is Protein ZNF365 (Znf365) from Mus musculus (Mouse).